The chain runs to 247 residues: MERGRLVYEGKAKSLYEHPEDENLLVMEFRDDITAFNMEKMDTVEGKGVYNCLISARLFEVLEDAGIPTHYVELADERRMVVERLDMFNLEVICRNMATGSLVERLPFEEGEKLDPPIVEFDYKSDEYGDPMVNMDHIRALGLATEEEVERMRELTLQVNEVLSEFLKDCDIILVDFKLEFGVNPDGEVVVGDEISPDTCRFWDAETEESLDKDIFRKDEGDVLAGYREAAERILRGDEEKLAMLPG.

This sequence belongs to the SAICAR synthetase family.

The enzyme catalyses 5-amino-1-(5-phospho-D-ribosyl)imidazole-4-carboxylate + L-aspartate + ATP = (2S)-2-[5-amino-1-(5-phospho-beta-D-ribosyl)imidazole-4-carboxamido]succinate + ADP + phosphate + 2 H(+). The protein operates within purine metabolism; IMP biosynthesis via de novo pathway; 5-amino-1-(5-phospho-D-ribosyl)imidazole-4-carboxamide from 5-amino-1-(5-phospho-D-ribosyl)imidazole-4-carboxylate: step 1/2. This chain is Phosphoribosylaminoimidazole-succinocarboxamide synthase, found in Methanopyrus kandleri (strain AV19 / DSM 6324 / JCM 9639 / NBRC 100938).